The following is a 505-amino-acid chain: uncharacterized protein (505 aa).

A helical transmembrane segment spans residues 11–27 (IGIIGGGIVGWLAAIAL).

It is found in the membrane. This is an uncharacterized protein from Sinorhizobium fredii (strain NBRC 101917 / NGR234).